The sequence spans 215 residues: Large ribosomal subunit protein uL3 (215 aa).

The segment at G136–K155 is disordered. Residue Q151 is modified to N5-methylglutamine.

Belongs to the universal ribosomal protein uL3 family. Part of the 50S ribosomal subunit. Forms a cluster with proteins L14 and L19. Post-translationally, methylated by PrmB.

Functionally, one of the primary rRNA binding proteins, it binds directly near the 3'-end of the 23S rRNA, where it nucleates assembly of the 50S subunit. This is Large ribosomal subunit protein uL3 from Rickettsia felis (strain ATCC VR-1525 / URRWXCal2) (Rickettsia azadi).